A 419-amino-acid polypeptide reads, in one-letter code: UDP-N-acetylglucosamine 1-carboxyvinyltransferase 2 (419 aa).

22–23 lines the phosphoenolpyruvate pocket; that stretch reads KN. Arg92 lines the UDP-N-acetyl-alpha-D-glucosamine pocket. The active-site Proton donor is Cys116. Cys116 is modified (2-(S-cysteinyl)pyruvic acid O-phosphothioketal). Residues 121 to 125, Asp306, and Ile328 contribute to the UDP-N-acetyl-alpha-D-glucosamine site; that span reads RPIDL.

This sequence belongs to the EPSP synthase family. MurA subfamily.

The protein localises to the cytoplasm. It catalyses the reaction phosphoenolpyruvate + UDP-N-acetyl-alpha-D-glucosamine = UDP-N-acetyl-3-O-(1-carboxyvinyl)-alpha-D-glucosamine + phosphate. It participates in cell wall biogenesis; peptidoglycan biosynthesis. Functionally, cell wall formation. Adds enolpyruvyl to UDP-N-acetylglucosamine. In Streptococcus pneumoniae (strain ATCC BAA-255 / R6), this protein is UDP-N-acetylglucosamine 1-carboxyvinyltransferase 2.